A 1106-amino-acid chain; its full sequence is Voltage-dependent calcium channel subunit alpha-2/delta-1 (1106 aa).

The N-terminal stretch at 1–26 is a signal peptide; that stretch reads MAAGRPLAWTLTLWQAWLILIGPSSE. The Extracellular portion of the chain corresponds to 27–1076; sequence EPFPSAVTIK…VLEDYTDCGG (1050 aa). Asn94 carries an N-linked (GlcNAc...) asparagine glycan. Phosphoserine is present on Ser121. Residues Asn138 and Asn186 are each glycosylated (N-linked (GlcNAc...) asparagine). The VWFA domain occupies 255–432; that stretch reads DMLILVDVSG…INTQEYLDVL (178 aa). A divalent metal cation contacts are provided by Asp261, Ser263, and Ser265. Residues 261-265 carry the MIDAS-like motif motif; the sequence is DVSGS. Asn326 and Asn350 each carry an N-linked (GlcNAc...) asparagine glycan. A disulfide bond links Cys406 and Cys1062. A Cache domain is found at 448–539; it reads WTNVYLDALE…QPKPIGVGIP (92 aa). N-linked (GlcNAc...) asparagine glycans are attached at residues Asn615, Asn784, and Asn891. A helical transmembrane segment spans residues 1077–1097; that stretch reads VSGLNPSLWSIIGIQFVLLWL. Residues 1098–1106 lie on the Cytoplasmic side of the membrane; the sequence is VSGSRHCLL.

It belongs to the calcium channel subunit alpha-2/delta family. In terms of assembly, dimer formed of alpha-2-1 and delta-1 chains; disulfide-linked. Voltage-dependent calcium channels are multisubunit complexes, consisting of alpha-1 (CACNA1), alpha-2 (CACNA2D), beta (CACNB) and delta (CACNA2D) subunits in a 1:1:1:1 ratio. Post-translationally, proteolytically processed into subunits alpha-2-1 and delta-1 that are disulfide-linked. Skeletal muscle.

The protein resides in the membrane. It is found in the cell membrane. Its function is as follows. The alpha-2/delta subunit of voltage-dependent calcium channels regulates calcium current density and activation/inactivation kinetics of the calcium channel. Plays an important role in excitation-contraction coupling. This is Voltage-dependent calcium channel subunit alpha-2/delta-1 (CACNA2D1) from Oryctolagus cuniculus (Rabbit).